We begin with the raw amino-acid sequence, 670 residues long: tRNA 5-methylaminomethyl-2-thiouridine biosynthesis bifunctional protein MnmC (670 aa).

Residues 1–242 (MTFSVQHAEI…KRECLSGLKI (242 aa)) form a tRNA (mnm(5)s(2)U34)-methyltransferase region. Residues 269–670 (IGGGIASLCA…KKWLKGSKVE (402 aa)) are FAD-dependent cmnm(5)s(2)U34 oxidoreductase.

In the N-terminal section; belongs to the methyltransferase superfamily. tRNA (mnm(5)s(2)U34)-methyltransferase family. It in the C-terminal section; belongs to the DAO family. FAD serves as cofactor.

The protein resides in the cytoplasm. It catalyses the reaction 5-aminomethyl-2-thiouridine(34) in tRNA + S-adenosyl-L-methionine = 5-methylaminomethyl-2-thiouridine(34) in tRNA + S-adenosyl-L-homocysteine + H(+). In terms of biological role, catalyzes the last two steps in the biosynthesis of 5-methylaminomethyl-2-thiouridine (mnm(5)s(2)U) at the wobble position (U34) in tRNA. Catalyzes the FAD-dependent demodification of cmnm(5)s(2)U34 to nm(5)s(2)U34, followed by the transfer of a methyl group from S-adenosyl-L-methionine to nm(5)s(2)U34, to form mnm(5)s(2)U34. The polypeptide is tRNA 5-methylaminomethyl-2-thiouridine biosynthesis bifunctional protein MnmC (Haemophilus influenzae (strain PittEE)).